Here is a 203-residue protein sequence, read N- to C-terminus: Orotate phosphoribosyltransferase (203 aa).

5-phospho-alpha-D-ribose 1-diphosphate is bound by residues arginine 94, lysine 98, histidine 100, and 120 to 128; that span reads EDLISTGGS. Serine 124 provides a ligand contact to orotate.

Belongs to the purine/pyrimidine phosphoribosyltransferase family. PyrE subfamily. Homodimer. It depends on Mg(2+) as a cofactor.

The catalysed reaction is orotidine 5'-phosphate + diphosphate = orotate + 5-phospho-alpha-D-ribose 1-diphosphate. It participates in pyrimidine metabolism; UMP biosynthesis via de novo pathway; UMP from orotate: step 1/2. Its function is as follows. Catalyzes the transfer of a ribosyl phosphate group from 5-phosphoribose 1-diphosphate to orotate, leading to the formation of orotidine monophosphate (OMP). The protein is Orotate phosphoribosyltransferase of Staphylococcus aureus (strain Mu50 / ATCC 700699).